The primary structure comprises 366 residues: Tyrosyl-DNA phosphodiesterase 2 (366 aa).

At M1 the chain carries N-acetylmethionine. The span at M1–A22 shows a compositional bias: low complexity. A disordered region spans residues M1–K30. A Glycyl lysine isopeptide (Lys-Gly) (interchain with G-Cter in SUMO2) cross-link involves residue K30. The residue at position 95 (T95) is a Phosphothreonine; by ACVR1B. The interval N126–L130 is interaction with 5' end of substrate DNA. The Mg(2+) site is built by D128 and E158. The interaction with 5' end of substrate DNA stretch occupies residues H232–R237. D268 serves as the catalytic Proton donor/acceptor. An interaction with 5' end of substrate DNA region spans residues N270–R272.

It belongs to the CCR4/nocturin family. As to quaternary structure, interacts with TRAF2, TRAF3, TRAF5, TRAF6, TNFRSF8/CD30, TNFRSF5/CD40, TNFRSF1B/TNF-R75, ETS1, ETS2, FLI1, SMAD3 and ACVR1B/ALK4. The cofactor is Mg(2+). Mn(2+) is required as a cofactor. In terms of processing, ubiquitinated by TRAF6.

The protein resides in the nucleus. It localises to the PML body. It is found in the nucleolus. The protein localises to the cytoplasm. Functionally, DNA repair enzyme that can remove a variety of covalent adducts from DNA through hydrolysis of a 5'-phosphodiester bond, giving rise to DNA with a free 5' phosphate. Catalyzes the hydrolysis of dead-end complexes between DNA and the topoisomerase 2 (TOP2) active site tyrosine residue. The 5'-tyrosyl DNA phosphodiesterase activity can enable the repair of TOP2-induced DNA double-strand breaks/DSBs without the need for nuclease activity, creating a 'clean' DSB with 5'-phosphate termini that are ready for ligation. Thereby, protects the transcription of many genes involved in neurological development and maintenance from the abortive activity of TOP2. Hydrolyzes 5'-phosphoglycolates on protruding 5' ends on DSBs due to DNA damage by radiation and free radicals. Has preference for single-stranded DNA or duplex DNA with a 4 base pair overhang as substrate. Also has 3'-tyrosyl DNA phosphodiesterase activity, but less efficiently and much slower than TDP1. Constitutes the major if not only 5'-tyrosyl-DNA phosphodiesterase in cells. Also acts as an adapter by participating in the specific activation of MAP3K7/TAK1 in response to TGF-beta: associates with components of the TGF-beta receptor-TRAF6-TAK1 signaling module and promotes their ubiquitination dependent complex formation. Involved in non-canonical TGF-beta induced signaling routes. May also act as a negative regulator of ETS1 and may inhibit NF-kappa-B activation. Acts as a regulator of ribosome biogenesis following stress. In Rattus norvegicus (Rat), this protein is Tyrosyl-DNA phosphodiesterase 2 (Tdp2).